A 196-amino-acid polypeptide reads, in one-letter code: Adenylyl-sulfate kinase (196 aa).

31–38 contacts ATP; that stretch reads GLSGAGKS. Residue Ser105 is the Phosphoserine intermediate of the active site.

This sequence belongs to the APS kinase family.

The catalysed reaction is adenosine 5'-phosphosulfate + ATP = 3'-phosphoadenylyl sulfate + ADP + H(+). It participates in sulfur metabolism; hydrogen sulfide biosynthesis; sulfite from sulfate: step 2/3. Its function is as follows. Catalyzes the synthesis of activated sulfate. In Pseudomonas aeruginosa (strain ATCC 15692 / DSM 22644 / CIP 104116 / JCM 14847 / LMG 12228 / 1C / PRS 101 / PAO1), this protein is Adenylyl-sulfate kinase (cysC).